We begin with the raw amino-acid sequence, 65 residues long: MPKLKTRKAAAKRFKATGTGKFMRRRAFHNHLLDHKTPKQKRHLKTKAVVDRTDEERVTLMMPYA.

This sequence belongs to the bacterial ribosomal protein bL35 family.

In Synechococcus sp. (strain CC9311), this protein is Large ribosomal subunit protein bL35.